Consider the following 261-residue polypeptide: Small ribosomal subunit protein eS1z (261 aa).

The span at 1–18 (MAVGKNKRISKGKKGGKK) shows a compositional bias: basic residues. The tract at residues 1–20 (MAVGKNKRISKGKKGGKKKA) is disordered.

Belongs to the eukaryotic ribosomal protein eS1 family. As to quaternary structure, component of the small ribosomal subunit. Mature ribosomes consist of a small (40S) and a large (60S) subunit. The 40S subunit contains about 33 different proteins and 1 molecule of RNA (18S). The 60S subunit contains about 49 different proteins and 3 molecules of RNA (25S, 5.8S and 5S).

The protein resides in the cytoplasm. This is Small ribosomal subunit protein eS1z from Vitis vinifera (Grape).